The sequence spans 310 residues: MGKKMSLILGAFLSVFLLVACSSTGTKTAKSDKLKVVATNSIIADMTKAIAGDKIDLHSIVPIGQDPHEYEPLPEDVEKTSNADVIFYNGINLEDGGQAWFTKLVKNAQKTKNKDYFAVSDGIDVIYLEGASEKGKEDPHAWLNLENGIIYSKNIAKQLIAKDPKNKETYEKNLKAYVAKLEKLDKEAKSKFDAIAENKKLIVTSEGCFKYFSKAYGVPSAYIWEINTEEEGTPDQISSLIEKLKVIKPSALFVESSVDRRPMETVSKDSGIPIYSEIFTDSIAKKGKPGDSYYAMMKWNLDKISEGLAK.

Residues 1–20 form the signal peptide; the sequence is MGKKMSLILGAFLSVFLLVA. Cys-21 carries the N-palmitoyl cysteine lipid modification. Cys-21 carries the S-diacylglycerol cysteine lipid modification. Fe(2+)-binding residues include His-68, His-140, Glu-206, and Asp-281.

The protein belongs to the bacterial solute-binding protein 9 family. Lipoprotein receptor antigen (Lrai) subfamily.

The protein localises to the cell membrane. In terms of biological role, part of the ATP-binding cassette (ABC) transport system MtsABC involved in iron import. Binds iron with high affinity and specificity and delivers it to the membrane permease for translocation into the cytoplasm. Has low affinity for Zn(2+) and Cu(2+). In Streptococcus pyogenes serotype M6 (strain ATCC BAA-946 / MGAS10394), this protein is Iron ABC transporter substrate-binding lipoprotein MtsA (mtsA).